The following is a 456-amino-acid chain: RuvB-like helicase 1 (456 aa).

70–77 (GPPGTGKT) contacts ATP.

This sequence belongs to the RuvB family. Forms homohexameric rings. May form a dodecamer with rept made of two stacked hexameric rings. Component of the chromatin remodeling Ino80 complex. Interacts with Myc and rept. Higher expression occurs in primordia of mesoderm, anterior and posterior midgut and cephalic furrow early in gastrulation, as well as in endoderm and mesoderm lineages during germ band extension. Later in development expression is only maintained in endoderm cells. Expressed in thoracic and abdominal segment neural precursors of all embryonic chordotonal organs.

The protein localises to the nucleus. The enzyme catalyses ATP + H2O = ADP + phosphate + H(+). Functionally, acts as a transcriptional coactivator in Wg signaling caused by altered arm signaling. Pont and rept interfere antagonistically with nuclear arm signaling function, and are required to enhance or reduce arm activity, respectively. Also an essential cofactor for the normal function of Myc; required for cellular proliferation and growth. Proposed core component of the chromatin remodeling Ino80 complex which is involved in transcriptional regulation, DNA replication and probably DNA repair. The polypeptide is RuvB-like helicase 1 (Drosophila melanogaster (Fruit fly)).